The following is a 327-amino-acid chain: Glycerol-3-phosphate dehydrogenase [NAD(P)+] (327 aa).

Residues W11, R30, and K103 each contribute to the NADPH site. Residues K103, G131, and S133 each contribute to the sn-glycerol 3-phosphate site. An NADPH-binding site is contributed by A135. Sn-glycerol 3-phosphate contacts are provided by K186, D243, S253, R254, and N255. Residue K186 is the Proton acceptor of the active site. R254 is a binding site for NADPH. NADPH is bound by residues V281 and E283.

This sequence belongs to the NAD-dependent glycerol-3-phosphate dehydrogenase family.

Its subcellular location is the cytoplasm. The enzyme catalyses sn-glycerol 3-phosphate + NAD(+) = dihydroxyacetone phosphate + NADH + H(+). It catalyses the reaction sn-glycerol 3-phosphate + NADP(+) = dihydroxyacetone phosphate + NADPH + H(+). The protein operates within membrane lipid metabolism; glycerophospholipid metabolism. Its function is as follows. Catalyzes the reduction of the glycolytic intermediate dihydroxyacetone phosphate (DHAP) to sn-glycerol 3-phosphate (G3P), the key precursor for phospholipid synthesis. This is Glycerol-3-phosphate dehydrogenase [NAD(P)+] from Wolbachia sp. subsp. Drosophila simulans (strain wRi).